The chain runs to 503 residues: Cytochrome P450 3A43 (503 aa).

Residue cysteine 442 coordinates heme.

Belongs to the cytochrome P450 family. Requires heme as cofactor. Highest expression level in prostate. Also expressed in liver, kidney, pancreas, fetal liver and fetal skeletal muscle.

It is found in the endoplasmic reticulum membrane. It localises to the microsome membrane. The catalysed reaction is an organic molecule + reduced [NADPH--hemoprotein reductase] + O2 = an alcohol + oxidized [NADPH--hemoprotein reductase] + H2O + H(+). In terms of biological role, exhibits low testosterone 6-beta-hydroxylase activity. The protein is Cytochrome P450 3A43 (CYP3A43) of Homo sapiens (Human).